Consider the following 567-residue polypeptide: Glucose-6-phosphate isomerase, cytosolic B (567 aa).

Residues 156–157 (GS), 212–217 (SKTFTT), Gln356, Glu360, His391, and Lys516 contribute to the D-glucose 6-phosphate site. Catalysis depends on Glu360, which acts as the Proton donor. Active-site residues include His391 and Lys516.

Belongs to the GPI family. In terms of assembly, homodimer.

The protein localises to the cytoplasm. It carries out the reaction alpha-D-glucose 6-phosphate = beta-D-fructose 6-phosphate. It functions in the pathway carbohydrate degradation; glycolysis; D-glyceraldehyde 3-phosphate and glycerone phosphate from D-glucose: step 2/4. Functionally, catalyzes the conversion of glucose-6-phosphate to fructose-6-phosphate, the second step in glycolysis, and the reverse reaction during gluconeogenesis. The sequence is that of Glucose-6-phosphate isomerase, cytosolic B from Oryza sativa subsp. japonica (Rice).